Here is a 983-residue protein sequence, read N- to C-terminus: Serine/threonine-protein kinase N2 (983 aa).

Residues 33–109 (KLDFSDTMVQ…LQELNAHIVV (77 aa)) form the REM-1 1 domain. Lysine 77 is modified (N6-acetyllysine). The tract at residues 107 to 135 (IVVSDPEDSTDCPRTPDTPNSDSRSSTSN) is disordered. At serine 110 the chain carries Phosphoserine. Phosphothreonine occurs at positions 121 and 124. The segment covering 121–135 (TPDTPNSDSRSSTSN) has biased composition (low complexity). REM-1 domains are found at residues 121 to 203 (TPDT…TNEL) and 204 to 284 (AFDN…ELPR). Phosphoserine occurs at positions 301, 305, 359, and 361. The interval 351-382 (TSVALPGWSPSDNRSSFMSRTSKSKSGSSRNL) is disordered. One can recognise a C2 domain in the interval 352–472 (SVALPGWSPS…LYLEPQGTLF (121 aa)). Residues 364–380 (RSSFMSRTSKSKSGSSR) show a composition bias toward low complexity. The tract at residues 381 to 462 (NLLKTDDLSN…FLDNQRHGMC (82 aa)) is necessary to rescue apical junction formation. Residues serine 534, serine 582, serine 619, and serine 630 each carry the phosphoserine modification. Positions 553–588 (LAPPASDSTVTKLDFDLEPEPPPAPPRASSLGETDE) are disordered. Residues 656–915 (FRCCAVLGRG…AEDVKKHPFF (260 aa)) enclose the Protein kinase domain. ATP contacts are provided by residues 662–670 (LGRGHFGKV) and lysine 685. Residue aspartate 781 is the Proton acceptor of the active site. Threonine 815 is modified (phosphothreonine; by PDPK1). Positions 916-976 (RLTDWSALMD…EEEQEMFHDF (61 aa)) are necessary for the catalytic activity. In terms of domain architecture, AGC-kinase C-terminal spans 916–983 (RLTDWSALMD…HDFDYVADWC (68 aa)). Serine 951 is modified (phosphoserine). Phosphothreonine is present on threonine 957. Residues 977–983 (DYVADWC) form a negatively regulates the responsiveness of the catalytic activity by cardiolipin and is required for optimal activation by the GTP-bound RhoA region.

The protein belongs to the protein kinase superfamily. AGC Ser/Thr protein kinase family. PKC subfamily. As to quaternary structure, interacts (via the REM repeats) with RHOA (GTP-bound form preferentially) and interacts (via the REM repeats) with RAC1 (GTP-bound form preferentially); the interactions induce its autophosphorylation. Interacts with NCK1 (via SH3 domains). Interacts with RHOC. Interacts with NCK1 and NCK2. Interacts with CD44. Interacts (via C-terminal kinase domain) with PDPK1; the interaction stimulates PDPK1 kinase activity. Interacts with MAP3K2; the interaction activates PRK2 kinase activity in a MAP3K2-independent kinase activity. Interacts (via C-terminal domain) with AKT1; the interaction occurs with the C-terminal cleavage product of PRK2 in apoptotic cells. Interacts (via C-terminus) with PTPN13 (via PDZ 3 domain). Interacts with CDK10. Post-translationally, phosphorylated during mitosis. Autophosphorylated. Phosphorylated. Phosphorylated by CDK10. In terms of processing, activated by limited proteolysis with trypsin. Proteolytically cleaved by caspase-3 during the induction of apoptotic cell death. Ubiquitous. Highly expressed in liver and lung Expressed in astrocytes (at protein level). Ubiquitous.

The protein resides in the cytoplasm. Its subcellular location is the nucleus. The protein localises to the membrane. It localises to the cell projection. It is found in the lamellipodium. The protein resides in the cytoskeleton. Its subcellular location is the cleavage furrow. The protein localises to the midbody. It localises to the cell junction. It catalyses the reaction L-seryl-[protein] + ATP = O-phospho-L-seryl-[protein] + ADP + H(+). The enzyme catalyses L-threonyl-[protein] + ATP = O-phospho-L-threonyl-[protein] + ADP + H(+). Its activity is regulated as follows. Kinase activity is activated upon binding to GTP-bound Rho1/Rac1 GTPases. Activated by caspase-3 (CASP3) cleavage during apoptosis. Activated by lipids, particularly cardiolipin and to a lesser extent by other acidic phospholipids and unsaturated fatty acids. Two specific sites, Thr-815 (activation loop of the kinase domain) and Thr-957 (turn motif), need to be phosphorylated for its full activation. Its function is as follows. PKC-related serine/threonine-protein kinase and Rho/Rac effector protein that participates in specific signal transduction responses in the cell. Plays a role in the regulation of cell cycle progression, actin cytoskeleton assembly, cell migration, cell adhesion, tumor cell invasion and transcription activation signaling processes. Phosphorylates CTTN in hyaluronan-induced astrocytes and hence decreases CTTN ability to associate with filamentous actin. Phosphorylates HDAC5, therefore lead to impair HDAC5 import. Direct RhoA target required for the regulation of the maturation of primordial junctions into apical junction formation in bronchial epithelial cells. Required for G2/M phases of the cell cycle progression and abscission during cytokinesis in a ECT2-dependent manner. Stimulates FYN kinase activity that is required for establishment of skin cell-cell adhesion during keratinocytes differentiation. Regulates epithelial bladder cells speed and direction of movement during cell migration and tumor cell invasion. Inhibits Akt pro-survival-induced kinase activity. Mediates Rho protein-induced transcriptional activation via the c-fos serum response factor (SRF). Involved in the negative regulation of ciliogenesis. This Mus musculus (Mouse) protein is Serine/threonine-protein kinase N2 (Pkn2).